Here is a 191-residue protein sequence, read N- to C-terminus: A-type ATP synthase subunit E (191 aa).

Belongs to the V-ATPase E subunit family. Has multiple subunits with at least A(3), B(3), C, D, E, F, H, I and proteolipid K(x). Post-translationally, the N-terminus is blocked.

The protein resides in the cell membrane. Functionally, component of the A-type ATP synthase that produces ATP from ADP in the presence of a proton gradient across the membrane. The sequence is that of A-type ATP synthase subunit E from Sulfurisphaera tokodaii (strain DSM 16993 / JCM 10545 / NBRC 100140 / 7) (Sulfolobus tokodaii).